Consider the following 416-residue polypeptide: UPF0761 membrane protein Rfer_2991 (416 aa).

6 helical membrane passes run 60-80 (MALV…PMFA), 117-137 (LGGA…LTID), 156-176 (VLVY…SLSI), 187-207 (VVGV…FFMV), 222-242 (WVKW…LELA), and 268-288 (ILLI…VIAA).

Belongs to the UPF0761 family.

The protein resides in the cell inner membrane. The polypeptide is UPF0761 membrane protein Rfer_2991 (Albidiferax ferrireducens (strain ATCC BAA-621 / DSM 15236 / T118) (Rhodoferax ferrireducens)).